We begin with the raw amino-acid sequence, 265 residues long: Phosphate import ATP-binding protein PstB 2 (265 aa).

The region spanning 13–260 is the ABC transporter domain; sequence FRTENLNVYY…PTKQATRDYV (248 aa). Position 45 to 52 (45 to 52) interacts with ATP; it reads GPSGCGKS.

It belongs to the ABC transporter superfamily. Phosphate importer (TC 3.A.1.7) family. The complex is composed of two ATP-binding proteins (PstB), two transmembrane proteins (PstC and PstA) and a solute-binding protein (PstS).

The protein resides in the cell inner membrane. It carries out the reaction phosphate(out) + ATP + H2O = ADP + 2 phosphate(in) + H(+). Part of the ABC transporter complex PstSACB involved in phosphate import. Responsible for energy coupling to the transport system. In Synechococcus sp. (strain JA-2-3B'a(2-13)) (Cyanobacteria bacterium Yellowstone B-Prime), this protein is Phosphate import ATP-binding protein PstB 2.